The chain runs to 75 residues: MSRILFVFLAVMAIFSTSFGQQCGLNEEFKSCGSCEPTCAKPRVTICTMECKIGCQCKSGYLRNGEGTCVLPEKC.

The signal sequence occupies residues 1–20 (MSRILFVFLAVMAIFSTSFG). Cystine bridges form between cysteine 23/cysteine 55, cysteine 32/cysteine 51, cysteine 35/cysteine 47, cysteine 39/cysteine 75, and cysteine 57/cysteine 69. The 53-residue stretch at 23 to 75 (CGLNEEFKSCGSCEPTCAKPRVTICTMECKIGCQCKSGYLRNGEGTCVLPEKC) folds into the TIL domain.

Belongs to the serine protease inhibitor-like (TIL domain-containing) family. Post-translationally, may be O-glycosylated. As to expression, expressed by the venom gland (at protein level) and expressed in fat body.

It localises to the secreted. Its subcellular location is the target cell membrane. Antimicrobial venom serine protease inhibitor. Exhibits inhibitory activity against chymotrypsin (IC(50)=19.56 nM, Ki=15.24 nM) and microbial serine proteases, such as subtilisin A (IC(50)=6.57 nM, Ki=6.83 nM) and proteinase K (IC(50)=7.11 nM, Ki=7.02 nM). Has not activity against trypsin, plasmin, tPA, thrombin, factor Xa or elastase. Binds and inhibits Gram-positive bacteria (B.subtilis (MIC=29.45 uM), B.thuringiensis (MIC=91.03 uM)) and the entomopathogenic fungus B.bassiana (MIC=30.09 uM) but not to E.coli. The sequence is that of Venom serine protease inhibitor BiVSPI from Bombus ignitus (Bumblebee).